Consider the following 237-residue polypeptide: Probable transcriptional regulatory protein NIS_0560 (237 aa).

The protein belongs to the TACO1 family.

It is found in the cytoplasm. This is Probable transcriptional regulatory protein NIS_0560 from Nitratiruptor sp. (strain SB155-2).